The following is a 318-amino-acid chain: Methionyl-tRNA formyltransferase (318 aa).

112–115 serves as a coordination point for (6S)-5,6,7,8-tetrahydrofolate; that stretch reads SLLP.

Belongs to the Fmt family.

It catalyses the reaction L-methionyl-tRNA(fMet) + (6R)-10-formyltetrahydrofolate = N-formyl-L-methionyl-tRNA(fMet) + (6S)-5,6,7,8-tetrahydrofolate + H(+). In terms of biological role, attaches a formyl group to the free amino group of methionyl-tRNA(fMet). The formyl group appears to play a dual role in the initiator identity of N-formylmethionyl-tRNA by promoting its recognition by IF2 and preventing the misappropriation of this tRNA by the elongation apparatus. The chain is Methionyl-tRNA formyltransferase from Mycobacterium leprae (strain Br4923).